We begin with the raw amino-acid sequence, 94 residues long: Integration host factor subunit beta (94 aa).

This sequence belongs to the bacterial histone-like protein family. Heterodimer of an alpha and a beta chain.

This protein is one of the two subunits of integration host factor, a specific DNA-binding protein that functions in genetic recombination as well as in transcriptional and translational control. The chain is Integration host factor subunit beta from Dechloromonas aromatica (strain RCB).